Consider the following 301-residue polypeptide: Probable 2-dehydro-3-deoxy-D-pentonate aldolase YjhH (301 aa).

Catalysis depends on charge relay system residues T46 and Y109. Y135 acts as the Proton donor in catalysis. Catalysis depends on K164, which acts as the Schiff-base intermediate with substrate.

The protein belongs to the DapA family.

It is found in the cytoplasm. The catalysed reaction is 2-dehydro-3-deoxy-D-arabinonate = glycolaldehyde + pyruvate. Its function is as follows. Functions as a 2-dehydro-3-deoxy-D-pentonate aldolase. The protein is Probable 2-dehydro-3-deoxy-D-pentonate aldolase YjhH (yjhH) of Escherichia coli (strain K12).